Here is a 129-residue protein sequence, read N- to C-terminus: Venom CUB domain-containing protein 1 (129 aa).

Residues 1–18 (MKLLGVLITIYCIASTLA) form the signal peptide. The CUB domain occupies 19–121 (IDVNVPSNGM…KASCKAYSIT (103 aa)). An intrachain disulfide couples C66 to C83.

The protein belongs to the venom CUB family. Post-translationally, contains 2 disulfide bonds. Expressed by the venom gland.

Its subcellular location is the secreted. This is Venom CUB domain-containing protein 1 from Platymeris rhadamanthus (Red spot assassin bug).